Consider the following 220-residue polypeptide: Ribose-5-phosphate isomerase A (220 aa).

Substrate contacts are provided by residues 28 to 31 (TGST), 81 to 84 (DGAD), and 94 to 97 (KGGG). Residue E103 is the Proton acceptor of the active site. K121 contacts substrate.

This sequence belongs to the ribose 5-phosphate isomerase family. Homodimer.

It catalyses the reaction aldehydo-D-ribose 5-phosphate = D-ribulose 5-phosphate. It participates in carbohydrate degradation; pentose phosphate pathway; D-ribose 5-phosphate from D-ribulose 5-phosphate (non-oxidative stage): step 1/1. Functionally, catalyzes the reversible conversion of ribose-5-phosphate to ribulose 5-phosphate. The protein is Ribose-5-phosphate isomerase A of Shewanella putrefaciens (strain CN-32 / ATCC BAA-453).